The chain runs to 349 residues: Dihydroorotase (349 aa).

Zn(2+) contacts are provided by histidine 17 and histidine 19. Residues histidine 19 to arginine 21 and asparagine 45 contribute to the substrate site. Residues lysine 105, histidine 142, and histidine 180 each coordinate Zn(2+). An N6-carboxylysine modification is found at lysine 105. Substrate is bound at residue histidine 142. Leucine 225 serves as a coordination point for substrate. Aspartate 253 serves as a coordination point for Zn(2+). Aspartate 253 is an active-site residue. 2 residues coordinate substrate: histidine 257 and alanine 269.

This sequence belongs to the metallo-dependent hydrolases superfamily. DHOase family. Class II DHOase subfamily. In terms of assembly, homodimer. Zn(2+) serves as cofactor.

The enzyme catalyses (S)-dihydroorotate + H2O = N-carbamoyl-L-aspartate + H(+). Its pathway is pyrimidine metabolism; UMP biosynthesis via de novo pathway; (S)-dihydroorotate from bicarbonate: step 3/3. Functionally, catalyzes the reversible cyclization of carbamoyl aspartate to dihydroorotate. The sequence is that of Dihydroorotase from Nitrosomonas europaea (strain ATCC 19718 / CIP 103999 / KCTC 2705 / NBRC 14298).